Here is a 454-residue protein sequence, read N- to C-terminus: DNA-binding protein BIN4 (454 aa).

3 disordered regions span residues 24 to 53, 103 to 249, and 380 to 454; these read LLSL…DDGD, AGKE…DKDT, and TFES…KAKK. Over residues 112–123 the composition is skewed to basic and acidic residues; the sequence is DCEKLSSKHKDA. The span at 132 to 150 shows a compositional bias: polar residues; that stretch reads LVSSDSEPSSPIKQEVTVS. The span at 229 to 249 shows a compositional bias: basic and acidic residues; sequence TPKEENCAQEILKTEDKDKDT. The segment covering 438 to 454 has biased composition (basic residues); sequence PAKKARNSAPKKPKAKK.

Interacts with TOP6A, RHL1 and itself, but not with TOP6B. Expressed in expanding cotyledons, vascular cells, elongating root cells, developing leaf trichomes, root and apical meristems and lateral root primordia.

The protein localises to the nucleus. Functionally, component of the DNA topoisomerase VI complex. Binds to DNA. Required for chromatin organization and progression of endoreduplication cycles. The loss of BIN4 activates the ATM- and ATR-dependent DNA damage responses in postmitotic cells and induces the ectopic expression of the mitotic G2/M-specific cyclin B1;1 gene in non-dividing cells. This Arabidopsis thaliana (Mouse-ear cress) protein is DNA-binding protein BIN4 (BIN4).